The primary structure comprises 512 residues: Probable DNA ligase (512 aa).

Aspartate 217 serves as a coordination point for ATP. Residue lysine 219 is the N6-AMP-lysine intermediate of the active site. ATP contacts are provided by arginine 224, arginine 239, glutamate 268, phenylalanine 306, arginine 377, and lysine 383.

Belongs to the ATP-dependent DNA ligase family. Mg(2+) serves as cofactor.

The catalysed reaction is ATP + (deoxyribonucleotide)n-3'-hydroxyl + 5'-phospho-(deoxyribonucleotide)m = (deoxyribonucleotide)n+m + AMP + diphosphate.. Functionally, DNA ligase that seals nicks in double-stranded DNA during DNA replication, DNA recombination and DNA repair. The chain is Probable DNA ligase from Beutenbergia cavernae (strain ATCC BAA-8 / DSM 12333 / CCUG 43141 / JCM 11478 / NBRC 16432 / NCIMB 13614 / HKI 0122).